The chain runs to 311 residues: tRNA-cytidine(32) 2-sulfurtransferase (311 aa).

Positions 47-52 (SGGKDS) match the PP-loop motif motif. Residues cysteine 122, cysteine 125, and cysteine 213 each contribute to the [4Fe-4S] cluster site.

Belongs to the TtcA family. In terms of assembly, homodimer. It depends on Mg(2+) as a cofactor. [4Fe-4S] cluster is required as a cofactor.

It is found in the cytoplasm. The enzyme catalyses cytidine(32) in tRNA + S-sulfanyl-L-cysteinyl-[cysteine desulfurase] + AH2 + ATP = 2-thiocytidine(32) in tRNA + L-cysteinyl-[cysteine desulfurase] + A + AMP + diphosphate + H(+). It participates in tRNA modification. Its function is as follows. Catalyzes the ATP-dependent 2-thiolation of cytidine in position 32 of tRNA, to form 2-thiocytidine (s(2)C32). The sulfur atoms are provided by the cysteine/cysteine desulfurase (IscS) system. This chain is tRNA-cytidine(32) 2-sulfurtransferase, found in Pectobacterium carotovorum subsp. carotovorum (strain PC1).